Here is a 433-residue protein sequence, read N- to C-terminus: Probable glycine dehydrogenase (decarboxylating) subunit 1 (433 aa).

This sequence belongs to the GcvP family. N-terminal subunit subfamily. In terms of assembly, the glycine cleavage system is composed of four proteins: P, T, L and H. In this organism, the P 'protein' is a heterodimer of two subunits.

The catalysed reaction is N(6)-[(R)-lipoyl]-L-lysyl-[glycine-cleavage complex H protein] + glycine + H(+) = N(6)-[(R)-S(8)-aminomethyldihydrolipoyl]-L-lysyl-[glycine-cleavage complex H protein] + CO2. The glycine cleavage system catalyzes the degradation of glycine. The P protein binds the alpha-amino group of glycine through its pyridoxal phosphate cofactor; CO(2) is released and the remaining methylamine moiety is then transferred to the lipoamide cofactor of the H protein. In Thermoplasma acidophilum (strain ATCC 25905 / DSM 1728 / JCM 9062 / NBRC 15155 / AMRC-C165), this protein is Probable glycine dehydrogenase (decarboxylating) subunit 1.